The following is a 329-amino-acid chain: GTP 3',8-cyclase (329 aa).

One can recognise a Radical SAM core domain in the interval 8–234; that stretch reads AFARKFYYLR…QQRARSDGPA (227 aa). Arg17 is a GTP binding site. [4Fe-4S] cluster contacts are provided by Cys24 and Cys28. Position 30 (Tyr30) interacts with S-adenosyl-L-methionine. Position 31 (Cys31) interacts with [4Fe-4S] cluster. Arg68 provides a ligand contact to GTP. Gly72 contacts S-adenosyl-L-methionine. A GTP-binding site is contributed by Thr99. Ser123 provides a ligand contact to S-adenosyl-L-methionine. GTP is bound at residue Lys160. Met194 lines the S-adenosyl-L-methionine pocket. Cys257 and Cys260 together coordinate [4Fe-4S] cluster. Residue 262–264 coordinates GTP; sequence RLR. Cys274 serves as a coordination point for [4Fe-4S] cluster.

It belongs to the radical SAM superfamily. MoaA family. As to quaternary structure, monomer and homodimer. Requires [4Fe-4S] cluster as cofactor.

The catalysed reaction is GTP + AH2 + S-adenosyl-L-methionine = (8S)-3',8-cyclo-7,8-dihydroguanosine 5'-triphosphate + 5'-deoxyadenosine + L-methionine + A + H(+). It functions in the pathway cofactor biosynthesis; molybdopterin biosynthesis. In terms of biological role, catalyzes the cyclization of GTP to (8S)-3',8-cyclo-7,8-dihydroguanosine 5'-triphosphate. The sequence is that of GTP 3',8-cyclase from Pectobacterium atrosepticum (strain SCRI 1043 / ATCC BAA-672) (Erwinia carotovora subsp. atroseptica).